The chain runs to 317 residues: Ribosomal protein L11 methyltransferase (317 aa).

Positions 158, 179, 201, and 244 each coordinate S-adenosyl-L-methionine.

It belongs to the methyltransferase superfamily. PrmA family.

The protein resides in the cytoplasm. The enzyme catalyses L-lysyl-[protein] + 3 S-adenosyl-L-methionine = N(6),N(6),N(6)-trimethyl-L-lysyl-[protein] + 3 S-adenosyl-L-homocysteine + 3 H(+). Its function is as follows. Methylates ribosomal protein L11. The sequence is that of Ribosomal protein L11 methyltransferase from Streptococcus agalactiae serotype III (strain NEM316).